The sequence spans 487 residues: Serine/threonine-protein kinase 4 (487 aa).

Met1 carries the post-translational modification N-acetylmethionine. Phosphothreonine is present on Thr3. A Protein kinase domain is found at 30–281 (FDVLEKLGEG…ATQLLQHPFV (252 aa)). Residues 36 to 44 (LGEGSYGSV) and Lys59 each bind ATP. Asp149 serves as the catalytic Proton acceptor. At Thr183 the chain carries Phosphothreonine; by autocatalysis. Position 265 is a phosphoserine (Ser265). Positions 290–310 (LRDLINEAMDVKLKRQEAQQR) form a coiled coil. Residues 305–338 (QEAQQREVDQDDEENSEEDELDSGTMVRAVGDDM) form a disordered region. The span at 313–326 (DQDDEENSEEDELD) shows a compositional bias: acidic residues. Position 320 is a phosphoserine (Ser320). A phosphothreonine mark is found at Thr340 and Thr367. Thr387 carries the phosphothreonine; by PKB/AKT1 modification. Phosphoserine occurs at positions 410 and 414. Phosphotyrosine is present on Tyr433. Positions 433 to 480 (YEFLKSWTVEDLQKRLLALDPMMEQEIEEIRQKYQSKRQPILDAIEAK) constitute an SARAH domain.

This sequence belongs to the protein kinase superfamily. STE Ser/Thr protein kinase family. STE20 subfamily. Homodimer; mediated via the coiled-coil region. Interacts with NORE1, which inhibits autoactivation. Interacts with and stabilizes SAV1. Interacts with RASSF1. Interacts with FOXO3. Interacts with RASSF2 (via SARAH domain). Interacts with AR, PKB/AKT1, TNNI3 and SIRT1. Interacts with DLG5 (via PDZ domain 3). Interacts with MARK3 and SCRIB in the presence of DLG5. Mg(2+) serves as cofactor. In terms of processing, autophosphorylated on serine and threonine residues. Phosphorylation at Thr-387 by PKB/AKT1, leads to inhibition of its: kinase activity, nuclear translocation and autophosphorylation at Thr-183. It also diminishes its cleavage by caspases and its ability to phosphorylate FOXO3. Post-translationally, proteolytically cleaved by caspase-3 during apoptosis at Asp-326 and Asp-349 resulting in a 37 kDa or a 39 kDa subunit respectively. The 39 kDa subunit is further cleaved into the 37 kDa form. Proteolytic cleavage results in kinase activation and nuclear translocation of the truncated form (MST1/N). It is less likely that cleavage at Asp-349 is a prerequisite for activation as this site is not conserved in the murine ortholog.

The protein resides in the cytoplasm. Its subcellular location is the nucleus. The enzyme catalyses L-seryl-[protein] + ATP = O-phospho-L-seryl-[protein] + ADP + H(+). It carries out the reaction L-threonyl-[protein] + ATP = O-phospho-L-threonyl-[protein] + ADP + H(+). Inhibited by the C-terminal non-catalytic region. Activated by caspase-cleavage. Full activation also requires homodimerization and autophosphorylation of Thr-183. Activated by RASSF1 which acts by preventing its dephosphorylation. Stress-activated, pro-apoptotic kinase which, following caspase-cleavage, enters the nucleus and induces chromatin condensation followed by internucleosomal DNA fragmentation. Key component of the Hippo signaling pathway which plays a pivotal role in organ size control and tumor suppression by restricting proliferation and promoting apoptosis. The core of this pathway is composed of a kinase cascade wherein STK3/MST2 and STK4/MST1, in complex with its regulatory protein SAV1, phosphorylates and activates LATS1/2 in complex with its regulatory protein MOB1, which in turn phosphorylates and inactivates YAP1 oncoprotein and WWTR1/TAZ. Phosphorylation of YAP1 by LATS2 inhibits its translocation into the nucleus to regulate cellular genes important for cell proliferation, cell death, and cell migration. STK3/MST2 and STK4/MST1 are required to repress proliferation of mature hepatocytes, to prevent activation of facultative adult liver stem cells (oval cells), and to inhibit tumor formation. Phosphorylates 'Ser-14' of histone H2B (H2BS14ph) during apoptosis. Phosphorylates FOXO3 upon oxidative stress, which results in its nuclear translocation and cell death initiation. Phosphorylates MOBKL1A, MOBKL1B and RASSF2. Phosphorylates TNNI3 (cardiac Tn-I) and alters its binding affinity to TNNC1 (cardiac Tn-C) and TNNT2 (cardiac Tn-T). Phosphorylates FOXO1 on 'Ser-212' and regulates its activation and stimulates transcription of PMAIP1 in a FOXO1-dependent manner. Phosphorylates SIRT1 and inhibits SIRT1-mediated p53/TP53 deacetylation, thereby promoting p53/TP53 dependent transcription and apoptosis upon DNA damage. Acts as an inhibitor of PKB/AKT1. Phosphorylates AR on 'Ser-650' and suppresses its activity by intersecting with PKB/AKT1 signaling and antagonizing formation of AR-chromatin complexes. The sequence is that of Serine/threonine-protein kinase 4 (STK4) from Lemur catta (Ring-tailed lemur).